The primary structure comprises 257 residues: Protein vip1 (257 aa).

The RRM domain occupies 3–76 (NQVIVTNISP…NKIQITSEDG (74 aa)). The segment at 74–99 (EDGGAASTTDQGGAGGDQAARQEDKP) is disordered. Positions 75 to 84 (DGGAASTTDQ) are enriched in low complexity. 2 positions are modified to phosphoserine: Ser132 and Ser177. The segment at 217–257 (ARRLADAKNQAEGTASPASSTPTAPAEKEPTAPTTESKTTE) is disordered. Thr230 bears the Phosphothreonine mark. Residues 230 to 257 (TASPASSTPTAPAEKEPTAPTTESKTTE) are compositionally biased toward low complexity. Ser232 and Ser235 each carry phosphoserine.

This is Protein vip1 (vip1) from Schizosaccharomyces pombe (strain 972 / ATCC 24843) (Fission yeast).